Reading from the N-terminus, the 199-residue chain is Molybdenum cofactor guanylyltransferase (199 aa).

Residues 12–14 (LAG), K25, N53, D71, and D101 each bind GTP. A Mg(2+)-binding site is contributed by D101.

Belongs to the MobA family. In terms of assembly, monomer. Requires Mg(2+) as cofactor.

The protein resides in the cytoplasm. The catalysed reaction is Mo-molybdopterin + GTP + H(+) = Mo-molybdopterin guanine dinucleotide + diphosphate. Functionally, transfers a GMP moiety from GTP to Mo-molybdopterin (Mo-MPT) cofactor (Moco or molybdenum cofactor) to form Mo-molybdopterin guanine dinucleotide (Mo-MGD) cofactor. The polypeptide is Molybdenum cofactor guanylyltransferase (Cupriavidus necator (strain ATCC 17699 / DSM 428 / KCTC 22496 / NCIMB 10442 / H16 / Stanier 337) (Ralstonia eutropha)).